Reading from the N-terminus, the 172-residue chain is MPPKRRQAEDTSDAEPQYTKKSKGNTGKAQPQELTKGSDQDGNTFWELGNNRRISSSVFRNTTLVNIREYYDAGGKLMPGKKGISLSLAQYQNLLKVIPQLNADLRAQGHAIEDPGFAQVAEQTDAPIETPKVKALESNKESIKKEKKKPRKSNIDVTSDEEEAAEDEDDDE.

2 disordered regions span residues Met-1 to Asn-43 and Gln-123 to Glu-172. The span at Gly-24–Asn-43 shows a compositional bias: polar residues. Basic and acidic residues predominate over residues Pro-131–Lys-144. A compositionally biased stretch (acidic residues) spans Thr-158–Glu-172.

Belongs to the transcriptional coactivator PC4 family.

The protein localises to the nucleus. General coactivator that functions cooperatively with TAFs and mediates functional interactions between upstream activators and the general transcriptional machinery. Binds single-stranded DNA. This chain is Putative RNA polymerase II transcriptional coactivator, found in Neurospora crassa (strain ATCC 24698 / 74-OR23-1A / CBS 708.71 / DSM 1257 / FGSC 987).